We begin with the raw amino-acid sequence, 279 residues long: MMATARPLQLLNTQQHFLNNVLAAWLARGFANKSDEGWLSSMFAHKVDARKDAHSNLLSKKETSNLYKIQFHNVKPEYMEEYNKLSDEVQKELHHDTDYPCEVVGSWNTWYGEQDQAVHLWRYSGGYPALTECLRKLNLNTAYLAFRKERSKMLLSRRNQLLLEFSFWNEPVPRSGSNIYELRSYQLLPGTMIEWGNHWARAIKYRQENNEAVGGFFTQIGDLYVVHHLWAYKDLQSREETRKAAWEKEGWDVSVHYTMPLIQKMESRIMIPMVHSPLQ.

Belongs to the NipSnap family.

It localises to the mitochondrion matrix. Its function is as follows. Protein involved in mitophagy. Accumulates on the mitochondria surface in response to mitochondrial depolarization and acts as a 'eat me' signal by recruiting proteins involved in selective autophagy. The polypeptide is Protein NipSnap homolog 1 (Danio rerio (Zebrafish)).